Here is a 656-residue protein sequence, read N- to C-terminus: Chaperone protein DnaK (656 aa).

T204 bears the Phosphothreonine; by autocatalysis mark. The tract at residues K602 to K656 is disordered. Over residues G620–G632 the composition is skewed to low complexity. Positions K647–K656 are enriched in basic and acidic residues.

It belongs to the heat shock protein 70 family.

In terms of biological role, acts as a chaperone. The polypeptide is Chaperone protein DnaK (Coxiella burnetii (strain CbuG_Q212) (Coxiella burnetii (strain Q212))).